Here is a 229-residue protein sequence, read N- to C-terminus: Peptidase E (229 aa).

Active-site charge relay system residues include Ser120, Asp135, and His157.

It belongs to the peptidase S51 family.

It localises to the cytoplasm. It carries out the reaction Dipeptidase E catalyzes the hydrolysis of dipeptides Asp-|-Xaa. It does not act on peptides with N-terminal Glu, Asn or Gln, nor does it cleave isoaspartyl peptides.. In terms of biological role, hydrolyzes dipeptides containing N-terminal aspartate residues. May play a role in allowing the cell to use peptide aspartate to spare carbon otherwise required for the synthesis of the aspartate family of amino acids. The polypeptide is Peptidase E (Shigella sonnei (strain Ss046)).